The following is a 64-amino-acid chain: Alpha-like toxin BmK M2 (64 aa).

Residues 2–64 enclose the LCN-type CS-alpha/beta domain; sequence RDAYIAKPHN…VPIRVPGKCH (63 aa). 4 cysteine pairs are disulfide-bonded: C12–C63, C16–C36, C22–C46, and C26–C48.

This sequence belongs to the long (4 C-C) scorpion toxin superfamily. Sodium channel inhibitor family. Alpha subfamily. As to expression, expressed by the venom gland.

It is found in the secreted. In terms of biological role, alpha toxins bind voltage-independently at site-3 of sodium channels (Nav) and inhibit the inactivation of the activated channels, thereby blocking neuronal transmission. This toxin is active against both mammals and insects, and is classified as an alpha-like toxin. This Olivierus martensii (Manchurian scorpion) protein is Alpha-like toxin BmK M2.